The following is a 998-amino-acid chain: Collagen alpha-1(I) chain (998 aa).

A disordered region spans residues Ser-1–Gly-998. Positions Gly-9–Arg-22 are enriched in low complexity. 4-hydroxyproline is present on residues Pro-25, Pro-28, Pro-30, Pro-39, Pro-42, Pro-45, Pro-59, Pro-74, Pro-80, Pro-89, and Pro-95. Over residues Asn-62–Glu-76 the composition is skewed to basic and acidic residues. Lys-98 carries the 5-hydroxylysine; alternate modification. An O-linked (Gal...) hydroxylysine; alternate glycan is attached at Lys-98. Ser-104 bears the Phosphoserine mark. Low complexity predominate over residues Asp-112 to Asn-128. A 4-hydroxyproline mark is found at Pro-122, Pro-125, Pro-131, Pro-140, Pro-146, Pro-167, Pro-176, Pro-179, Pro-206, Pro-209, Pro-221, Pro-227, Pro-236, Pro-242, Pro-245, and Pro-260. The span at Pro-146–Ala-164 shows a compositional bias: low complexity. Over residues Pro-166 to Phe-178 the composition is skewed to pro residues. Positions Ala-212 to Ser-251 are enriched in low complexity. 5-hydroxylysine is present on Lys-263. 8 positions are modified to 4-hydroxyproline: Pro-269, Pro-272, Pro-284, Pro-293, Pro-308, Pro-314, Pro-323, and Pro-329. Residues Gly-318–Gly-327 show a composition bias toward gly residues. Lys-338 bears the 5-hydroxylysine mark. Pro-347, Pro-356, Pro-362, Pro-368, Pro-377, Pro-380, Pro-389, Pro-398, Pro-404, Pro-416, Pro-425, Pro-434, Pro-437, Pro-455, Pro-472, Pro-478, Pro-484, Pro-490, Pro-496, Pro-502, Pro-514, Pro-523, Pro-537, Pro-543, and Pro-552 each carry 4-hydroxyproline. The span at Lys-371–Arg-397 shows a compositional bias: low complexity. Low complexity predominate over residues Ala-406–Pro-425. Residues Pro-484–Gln-493 show a composition bias toward low complexity. A 5-hydroxylysine modification is found at Lys-564. A 4-hydroxyproline mark is found at Pro-570, Pro-585, and Pro-591. The span at Ser-597–Ala-611 shows a compositional bias: low complexity. Ser-600 is subject to Phosphoserine. Pro-612, Pro-618, Pro-621, Pro-630, Pro-636, Pro-654, Pro-663, and Pro-672 each carry 4-hydroxyproline. Low complexity predominate over residues Ala-624 to Ala-651. Over residues Pro-653–Pro-665 the composition is skewed to pro residues. Position 675 is a 5-hydroxylysine (Lys-675). Residues Ser-680 to Val-696 are compositionally biased toward low complexity. A 4-hydroxyproline mark is found at Pro-684 and Pro-690. Pro-698 is modified (3-hydroxyproline). Pro-699, Pro-708, Pro-711, Pro-732, Pro-741, Pro-749, Pro-758, Pro-776, Pro-785, Pro-788, Pro-794, Pro-809, Pro-815, Pro-821, Pro-830, and Pro-836 each carry 4-hydroxyproline. Residues Glu-725 to Glu-734 are compositionally biased toward low complexity. Low complexity predominate over residues Lys-746–Pro-758. Residues Pro-808–Ala-818 are compositionally biased toward pro residues. 5-hydroxylysine is present on Lys-845. Over residues Pro-853 to Val-868 the composition is skewed to pro residues. A 4-hydroxyproline mark is found at Pro-856, Pro-859, and Pro-862. The segment covering Ala-889 to Pro-903 has biased composition (low complexity). The span at Arg-904–Ile-918 shows a compositional bias: basic and acidic residues. A 5-hydroxylysine modification is found at Lys-907. Residue Lys-919 is modified to 5-hydroxylysine; alternate. An O-linked (Gal...) hydroxylysine; alternate glycan is attached at Lys-919. 4-hydroxyproline occurs at positions 934, 937, 955, and 970. Positions Pro-937–Pro-970 are enriched in low complexity. The residue at position 975 (Pro-975) is a 3-hydroxyproline. Residue Pro-976 is modified to 4-hydroxyproline. Positions Val-988–Gly-998 are enriched in pro residues. Pro-990 is subject to 3-hydroxyproline. Residue Pro-991 is modified to 4-hydroxyproline. Pro-993 bears the 3-hydroxyproline mark. Pro-994 carries the post-translational modification 4-hydroxyproline. Position 996 is a 3-hydroxyproline (Pro-996). Pro-997 is subject to 4-hydroxyproline.

This sequence belongs to the fibrillar collagen family. Trimers of one alpha 2(I) and two alpha 1(I) chains. Contains mostly 4-hydroxyproline. Proline residues at the third position of the tripeptide repeating unit (G-X-Y) are hydroxylated in some or all of the chains. In terms of processing, contains 3-hydroxyproline at a few sites. This modification occurs on the first proline residue in the sequence motif Gly-Pro-Hyp, where Hyp is 4-hydroxyproline. Post-translationally, lysine residues at the third position of the tripeptide repeating unit (G-X-Y) are 5-hydroxylated in some or all of the chains. O-glycosylated on hydroxylated lysine residues. The O-linked glycan consists of a Glc-Gal disaccharide. As to expression, expressed in bones.

It localises to the secreted. The protein localises to the extracellular space. Its subcellular location is the extracellular matrix. Functionally, type I collagen is a member of group I collagen (fibrillar forming collagen). This Nothrotheriops shastensis (Shasta ground sloth) protein is Collagen alpha-1(I) chain.